A 557-amino-acid chain; its full sequence is Dihydroxy-acid dehydratase (557 aa).

Residue Asp78 coordinates Mg(2+). Cys119 contributes to the [2Fe-2S] cluster binding site. 2 residues coordinate Mg(2+): Asp120 and Lys121. Position 121 is an N6-carboxylysine (Lys121). Residue Cys191 coordinates [2Fe-2S] cluster. Residue Glu442 participates in Mg(2+) binding. Ser468 acts as the Proton acceptor in catalysis.

It belongs to the IlvD/Edd family. As to quaternary structure, homodimer. [2Fe-2S] cluster is required as a cofactor. It depends on Mg(2+) as a cofactor.

The enzyme catalyses (2R)-2,3-dihydroxy-3-methylbutanoate = 3-methyl-2-oxobutanoate + H2O. It catalyses the reaction (2R,3R)-2,3-dihydroxy-3-methylpentanoate = (S)-3-methyl-2-oxopentanoate + H2O. Its pathway is amino-acid biosynthesis; L-isoleucine biosynthesis; L-isoleucine from 2-oxobutanoate: step 3/4. The protein operates within amino-acid biosynthesis; L-valine biosynthesis; L-valine from pyruvate: step 3/4. Functionally, functions in the biosynthesis of branched-chain amino acids. Catalyzes the dehydration of (2R,3R)-2,3-dihydroxy-3-methylpentanoate (2,3-dihydroxy-3-methylvalerate) into 2-oxo-3-methylpentanoate (2-oxo-3-methylvalerate) and of (2R)-2,3-dihydroxy-3-methylbutanoate (2,3-dihydroxyisovalerate) into 2-oxo-3-methylbutanoate (2-oxoisovalerate), the penultimate precursor to L-isoleucine and L-valine, respectively. The protein is Dihydroxy-acid dehydratase of Syntrophobacter fumaroxidans (strain DSM 10017 / MPOB).